The chain runs to 417 residues: Histidine--tRNA ligase (417 aa).

The protein belongs to the class-II aminoacyl-tRNA synthetase family. Homodimer.

Its subcellular location is the cytoplasm. The enzyme catalyses tRNA(His) + L-histidine + ATP = L-histidyl-tRNA(His) + AMP + diphosphate + H(+). This Acetivibrio thermocellus (strain ATCC 27405 / DSM 1237 / JCM 9322 / NBRC 103400 / NCIMB 10682 / NRRL B-4536 / VPI 7372) (Clostridium thermocellum) protein is Histidine--tRNA ligase.